Consider the following 481-residue polypeptide: uncharacterized protein (481 aa).

13 helical membrane-spanning segments follow: residues 3–23 (YLPMMIVFPLIMAIIMNLLHG), 33–53 (FITAAILIILPFISQYGYYYF), 75–95 (QAIIVTLSLIASLVLITGMGE), 99–119 (NNMFVTLSLMGFASIAAIVLA), 122–142 (IFNLYVFFEIVSIVQAGLVFL), 155–175 (YMIMGNVAAALMLLGIAFLLA), 196–216 (IYGGLLLLIVGLAYGAGLPPF), 241–261 (FVLVGLMIIILKLFNGLDYFA), 264–284 (HAVLIALGVLAMVFGVVMALL), 303–323 (VATGLALGTPLGIVAGIFHAI), 351–371 (GGLLPLMPSVAFMVLCAKLAI), 400–420 (IIMIIVSIGTFVSMMKAFYLI), and 443–463 (VFSLFVLTALCIIIGLYPDIV).

The protein resides in the cell membrane. This is an uncharacterized protein from Methanocaldococcus jannaschii (strain ATCC 43067 / DSM 2661 / JAL-1 / JCM 10045 / NBRC 100440) (Methanococcus jannaschii).